The sequence spans 532 residues: Bifunctional purine biosynthesis protein PurH (532 aa).

Residues 1–147 (MAKIKRALIS…KNYRSVTVVT (147 aa)) form the MGS-like domain.

It belongs to the PurH family.

The enzyme catalyses (6R)-10-formyltetrahydrofolate + 5-amino-1-(5-phospho-beta-D-ribosyl)imidazole-4-carboxamide = 5-formamido-1-(5-phospho-D-ribosyl)imidazole-4-carboxamide + (6S)-5,6,7,8-tetrahydrofolate. It catalyses the reaction IMP + H2O = 5-formamido-1-(5-phospho-D-ribosyl)imidazole-4-carboxamide. It participates in purine metabolism; IMP biosynthesis via de novo pathway; 5-formamido-1-(5-phospho-D-ribosyl)imidazole-4-carboxamide from 5-amino-1-(5-phospho-D-ribosyl)imidazole-4-carboxamide (10-formyl THF route): step 1/1. It functions in the pathway purine metabolism; IMP biosynthesis via de novo pathway; IMP from 5-formamido-1-(5-phospho-D-ribosyl)imidazole-4-carboxamide: step 1/1. This chain is Bifunctional purine biosynthesis protein PurH, found in Magnetococcus marinus (strain ATCC BAA-1437 / JCM 17883 / MC-1).